The chain runs to 208 residues: Large ribosomal subunit protein uL4 (208 aa).

The disordered stretch occupies residues 54-78 (RAEVSHTTKKPWNQKGTGRARAGMS).

It belongs to the universal ribosomal protein uL4 family. As to quaternary structure, part of the 50S ribosomal subunit.

In terms of biological role, one of the primary rRNA binding proteins, this protein initially binds near the 5'-end of the 23S rRNA. It is important during the early stages of 50S assembly. It makes multiple contacts with different domains of the 23S rRNA in the assembled 50S subunit and ribosome. Functionally, forms part of the polypeptide exit tunnel. In Methylobacillus flagellatus (strain ATCC 51484 / DSM 6875 / VKM B-1610 / KT), this protein is Large ribosomal subunit protein uL4.